The following is a 594-amino-acid chain: Lipolysis-stimulated lipoprotein receptor (594 aa).

Residues Met1–Ser35 form the signal peptide. At Ala36 to Asp206 the chain is on the extracellular side. Residues Pro89–Ala181 form the Ig-like V-type domain. A disulfide bond links Cys113 and Cys165. A helical membrane pass occupies residues Trp207–Cys227. Residues Trp228–Val594 are Cytoplasmic-facing. At Thr283 the chain carries Phosphothreonine. Position 308 is a phosphoserine; by MAPK8 and MAPK9 (Ser308). Residues Ser314, Ser332, Ser375, and Ser379 each carry the phosphoserine modification. Residues Ser375–Ser387 are compositionally biased toward basic and acidic residues. The tract at residues Ser375–Val594 is disordered. Residue Thr396 is modified to Phosphothreonine. Residues Ser407, Ser410, and Ser436 each carry the phosphoserine modification. Residues Arg435–Asn444 show a composition bias toward basic and acidic residues. Residues Arg445–Gly460 show a composition bias toward low complexity. Ser471 and Ser473 each carry phosphoserine. Over residues Arg472–Arg550 the composition is skewed to basic and acidic residues. Tyr478 is subject to Phosphotyrosine. Ser576 is subject to Phosphoserine. Lys583 participates in a covalent cross-link: Glycyl lysine isopeptide (Lys-Gly) (interchain with G-Cter in ubiquitin). 2 positions are modified to phosphoserine: Ser588 and Ser591.

This sequence belongs to the immunoglobulin superfamily. LISCH7 family. Homotrimer or homotetramer. Assembles into cell-cell contacts. Interacts (via the cytoplasmic domain) with MARVELD2 (via C-terminal cytoplasmic domain); the interaction is required to recruit MARVELD2 to tricellular contacts. Interacts with OCLN. Phosphorylation at Ser-308 by MAPK8/JNK1 and MAPK9/JNK2 may be required for exclusive localization at tricellular tight junstions. Post-translationally, polyubiquitinated at Lys-583 via 'Lys-63'-linked ubiquitin chains; deubiquitinated by USP53. As to expression, expressed in epithelial tissues (at protein level). Specifically expressed in liver and to a lower extent in kidney (at protein level). Also detected in brain, testis, ovaries, adrenal gland, intestine, muscle, and lung. In colon, only expressed in the lower portion of crypts. Expressed in the liver. Expressed in liver, stomach, small intestine and colon. Also detected in other epithelial tissues.

Its subcellular location is the cell membrane. The protein resides in the cell junction. It localises to the tight junction. Probable role in the clearance of triglyceride-rich lipoprotein from blood. Binds chylomicrons, LDL and VLDL in presence of free fatty acids and allows their subsequent uptake in the cells. Maintains epithelial barrier function by recruiting MARVELD2/tricellulin to tricellular tight junctions. This is Lipolysis-stimulated lipoprotein receptor from Mus musculus (Mouse).